Reading from the N-terminus, the 585-residue chain is SLAIN motif-containing protein-like (585 aa).

Disordered stretches follow at residues 1–34 (MVVP…PNLT), 55–125 (NQTL…RVEE), 324–365 (QDYA…EDEC), 402–476 (PRLS…SDGQ), and 492–585 (GSMS…DGCY). Polar residues predominate over residues 68 to 83 (GGTNNSNLKAGSNINN). Low complexity predominate over residues 327–345 (ASTSASRRSSSASLQSLRR). A compositionally biased stretch (acidic residues) spans 351 to 365 (QEFDSYSQEDEEDEC). Polar residues-rich tracts occupy residues 425–434 (PNLTPRTSLR), 441–476 (NSRS…SDGQ), and 549–563 (ASPS…TPRS). Positions 575-585 (LTDESWKDGCY) are enriched in basic and acidic residues.

It belongs to the SLAIN motif-containing family.

The sequence is that of SLAIN motif-containing protein-like from Danio rerio (Zebrafish).